Consider the following 498-residue polypeptide: MRINPTTSGPGVSAFANKNLGHIAQIIGPVLDVAFPPGKMPNIYNALVVKGRDTVDQPINVTCEVQQLLGNNRVRAVAMSATDGLTRGMEVIDTGAPLSVPVGGVTLGRIFNVLGEPVDNLGPVDTRTTSPIHKSAPAFIQLDTRLSIFETGIKVVDLLAPYRRGGKIGLFGGAGVGKTVLIMELINNIAKAHGGVSVFGGVGERTREGNDLYMEMKESGVINDQNLSESKVALVYGQMNEPPGARMRVGLTALTMAEYFRDVNEQDVLLFIDNIFRFVQAGSEVSALLGRMPSAVGYQPTLSTEMGSLQERITSTKEGSITSIQAVYVPADDLTDPAPATTFAHLDATTVLSRGLAAKGIYPAVDPLDSTSTMLQPRIVGEEHYETAQRVKQTLQRYKELQDIIAILGLDELSEEDRLTVARARKIERFLSQPFFVAEVFTGSPGKYVGLAETIRGFKLILSGELDGLPEQAFYLVGNIDEVTAKATNLEMESNLKK.

172-179 is a binding site for ATP; sequence GGAGVGKT.

Belongs to the ATPase alpha/beta chains family. In terms of assembly, F-type ATPases have 2 components, CF(1) - the catalytic core - and CF(0) - the membrane proton channel. CF(1) has five subunits: alpha(3), beta(3), gamma(1), delta(1), epsilon(1). CF(0) has four main subunits: a(1), b(1), b'(1) and c(9-12).

The protein localises to the plastid. It localises to the chloroplast thylakoid membrane. The enzyme catalyses ATP + H2O + 4 H(+)(in) = ADP + phosphate + 5 H(+)(out). Produces ATP from ADP in the presence of a proton gradient across the membrane. The catalytic sites are hosted primarily by the beta subunits. The polypeptide is ATP synthase subunit beta, chloroplastic (Citrus sinensis (Sweet orange)).